We begin with the raw amino-acid sequence, 206 residues long: Small ribosomal subunit protein uS4 (206 aa).

The 61-residue stretch at 96 to 156 (GRLDNVVYRM…EKAKQQARIK (61 aa)) folds into the S4 RNA-binding domain.

The protein belongs to the universal ribosomal protein uS4 family. In terms of assembly, part of the 30S ribosomal subunit. Contacts protein S5. The interaction surface between S4 and S5 is involved in control of translational fidelity.

In terms of biological role, one of the primary rRNA binding proteins, it binds directly to 16S rRNA where it nucleates assembly of the body of the 30S subunit. Functionally, with S5 and S12 plays an important role in translational accuracy. The protein is Small ribosomal subunit protein uS4 of Vibrio campbellii (strain ATCC BAA-1116).